A 568-amino-acid polypeptide reads, in one-letter code: 2-succinyl-5-enolpyruvyl-6-hydroxy-3-cyclohexene-1-carboxylate synthase (568 aa).

It belongs to the TPP enzyme family. MenD subfamily. Homodimer. Mg(2+) serves as cofactor. The cofactor is Mn(2+). Thiamine diphosphate is required as a cofactor.

The enzyme catalyses isochorismate + 2-oxoglutarate + H(+) = 5-enolpyruvoyl-6-hydroxy-2-succinyl-cyclohex-3-ene-1-carboxylate + CO2. Its pathway is quinol/quinone metabolism; 1,4-dihydroxy-2-naphthoate biosynthesis; 1,4-dihydroxy-2-naphthoate from chorismate: step 2/7. It functions in the pathway quinol/quinone metabolism; menaquinone biosynthesis. Functionally, catalyzes the thiamine diphosphate-dependent decarboxylation of 2-oxoglutarate and the subsequent addition of the resulting succinic semialdehyde-thiamine pyrophosphate anion to isochorismate to yield 2-succinyl-5-enolpyruvyl-6-hydroxy-3-cyclohexene-1-carboxylate (SEPHCHC). In Haemophilus influenzae (strain PittEE), this protein is 2-succinyl-5-enolpyruvyl-6-hydroxy-3-cyclohexene-1-carboxylate synthase.